Reading from the N-terminus, the 283-residue chain is ATP phosphoribosyltransferase (283 aa).

This sequence belongs to the ATP phosphoribosyltransferase family. Long subfamily. Requires Mg(2+) as cofactor.

Its subcellular location is the cytoplasm. The catalysed reaction is 1-(5-phospho-beta-D-ribosyl)-ATP + diphosphate = 5-phospho-alpha-D-ribose 1-diphosphate + ATP. Its pathway is amino-acid biosynthesis; L-histidine biosynthesis; L-histidine from 5-phospho-alpha-D-ribose 1-diphosphate: step 1/9. Its activity is regulated as follows. Feedback inhibited by histidine. In terms of biological role, catalyzes the condensation of ATP and 5-phosphoribose 1-diphosphate to form N'-(5'-phosphoribosyl)-ATP (PR-ATP). Has a crucial role in the pathway because the rate of histidine biosynthesis seems to be controlled primarily by regulation of HisG enzymatic activity. This Rhodococcus erythropolis (strain PR4 / NBRC 100887) protein is ATP phosphoribosyltransferase.